Reading from the N-terminus, the 252-residue chain is Transcriptional regulatory protein HptR (252 aa).

The Response regulatory domain maps to 3–118 (KVVICDDERI…QLEVILGRLV (116 aa)). D55 is modified (4-aspartylphosphate). Residues 153–250 (NQIVDQIKQS…QMAPSDYCKQ (98 aa)) enclose the HTH araC/xylS-type domain. 2 DNA-binding regions (H-T-H motif) span residues 170 to 191 (SDLIQHIDVSESYAMRTFKDHV) and 217 to 240 (HYEIADKVGFSEYKMFSYHFKKYL).

In terms of processing, phosphorylated by HptS.

Its subcellular location is the cytoplasm. Member of the two-component regulatory system HptS/HptR that regulates genes involved in hexose phosphate transport system in response to changes in extracellular phosphate sources. Activates uhpT expression to facilitate glucose-6-phosphate/G6P utilization by directly binding to its promoter. Antagonizes CcpA-dependent transcription of a subset of CcpA-regulated genes involved in antibiotic susceptibility. In Staphylococcus aureus (strain bovine RF122 / ET3-1), this protein is Transcriptional regulatory protein HptR (hptR).